The following is a 244-amino-acid chain: Ras-related protein Rab-12 (244 aa).

Met-1 is modified (N-acetylmethionine). The segment covering 1-10 (MDPGAALQRR) has biased composition (low complexity). The disordered stretch occupies residues 1-37 (MDPGAALQRRAGGGGGLGAGSPALSGGQGRRRKQPPR). 2 positions are modified to phosphoserine: Ser-21 and Ser-25. Residue Gly-52 participates in GDP binding. Gly-52, Val-53, Gly-54, Lys-55, and Thr-56 together coordinate GTP. GDP-binding residues include Gly-54, Lys-55, Thr-56, and Ser-57. A Mg(2+)-binding site is contributed by Thr-56. Short sequence motifs (switch) lie at residues 65-79 (DTFCEACKSTVGVDF) and 97-114 (DTAGQERFNSITSAYYRS). GTP contacts are provided by Ser-73 and Thr-74. The Mg(2+) site is built by Thr-74 and Asp-97. Gly-100 lines the GTP pocket. Residue Ser-106 is modified to Phosphoserine; by LRRK2. GDP is bound by residues Asn-155, Lys-156, Asp-158, and Cys-159. Residues Asn-155, Lys-156, and Asp-158 each coordinate GTP. Positions 186, 187, and 188 each coordinate GTP. 2 residues coordinate GDP: Ala-187 and Lys-188. Residues 225–244 (QPEPEIPPELPPPRPHVRCC) are disordered. Positions 228-238 (PEIPPELPPPR) are enriched in pro residues. S-geranylgeranyl cysteine attachment occurs at residues Cys-243 and Cys-244.

The protein belongs to the small GTPase superfamily. Rab family. As to quaternary structure, interacts with RABIF. Interacts with OPTN. Interacts with LRRK2; interaction facilitates phosphorylation of Ser-106. Interacts with GDI1, GDI2, CHM and CHML; these interactions are disrupted by phosphorylation on Ser-106. Interacts with RILPL1 and RILPL2; these interactions are dependent on phosphorylation of Ser-106. Mg(2+) serves as cofactor. In terms of processing, phosphorylation of Ser-106 in the switch II region by LRRK2 prevents the association of RAB regulatory proteins, including CHM, CHML and RAB GDP dissociation inhibitors GDI1 and GDI2.

The protein resides in the recycling endosome membrane. Its subcellular location is the lysosome membrane. It localises to the golgi apparatus membrane. The protein localises to the cytoplasmic vesicle. It is found in the autophagosome. The enzyme catalyses GTP + H2O = GDP + phosphate + H(+). Regulated by guanine nucleotide exchange factors (GEFs) including DENND3 which promote the exchange of bound GDP for free GTP. Regulated by GTPase activating proteins (GAPs) which increase the GTP hydrolysis activity. Inhibited by GDP dissociation inhibitors (GDIs). In terms of biological role, the small GTPases Rab are key regulators of intracellular membrane trafficking, from the formation of transport vesicles to their fusion with membranes. Rabs cycle between an inactive GDP-bound form and an active GTP-bound form that is able to recruit to membranes different sets of downstream effectors directly responsible for vesicle formation, movement, tethering and fusion. RAB12 may play a role in protein transport from recycling endosomes to lysosomes regulating, for instance, the degradation of the transferrin receptor. Involved in autophagy. The sequence is that of Ras-related protein Rab-12 from Homo sapiens (Human).